The sequence spans 216 residues: Elongation factor Ts (216 aa).

Positions 81–84 (TDFV) are involved in Mg(2+) ion dislocation from EF-Tu.

The protein belongs to the EF-Ts family.

It localises to the cytoplasm. Its function is as follows. Associates with the EF-Tu.GDP complex and induces the exchange of GDP to GTP. It remains bound to the aminoacyl-tRNA.EF-Tu.GTP complex up to the GTP hydrolysis stage on the ribosome. This chain is Elongation factor Ts, found in Geobacter sulfurreducens (strain ATCC 51573 / DSM 12127 / PCA).